Here is a 413-residue protein sequence, read N- to C-terminus: Oxidoreductase vrtI (413 aa).

The 107-residue stretch at 235-341 folds into the Fe2OG dioxygenase domain; it reads DAESLTTLSM…RYSIAYFLRA (107 aa). Fe cation is bound by residues His-262, Asp-264, and His-319. Arg-332 is a binding site for 2-oxoglutarate.

It belongs to the iron/ascorbate-dependent oxidoreductase family.

It participates in secondary metabolite biosynthesis; terpenoid biosynthesis. Functionally, oxidoreductase; part of the gene cluster that mediates the biosynthesis of viridicatumtoxin, a tetracycline-like fungal meroterpenoid with a unique, fused spirobicyclic ring system. The first step of the pathway is the production of the malonamoyl-CoA starter unit for the polyketide synthase vrtA. The aldolase vrtJ may be involved in the synthesis of the malonamate substrate for malonamoyl-CoA synthetase vrtB. The polyketide synthase vrtA then may utilize the malonamoyl-CoA starter unit, followed by sequential condensation of eight malonyl-CoA units to form the polyketide backbone. The cyclization of the last ring could be mediated by the lactamase-like protein vrtG. The proposed post-PKS tailoring steps are a hydroxylation at C5 catalyzed the cytochrome P450 monooxygenase vrtE, a hydroxylation at C12a catalyzed by VrtH and/or VrtI, and an O-methylation by the O-methyltransferase vrtF. VrtC is then proposed to catalyze the transfer of a geranyl group synthesized by vrtD to the aromatic C ring of the tetracyclic polyketide intermediate of viridicatumtoxin to yield previridicatumtoxin. Finally, the cytochrome P450 monooxygenase vrtK catalyzes the spirocyclization of the geranyl moiety of previridicatumtoxin to afford viridicatumtoxin. The protein is Oxidoreductase vrtI of Penicillium aethiopicum.